Consider the following 331-residue polypeptide: Polyprenyl transferase mpaA' (331 aa).

Transmembrane regions (helical) follow at residues 27–47 (MPYYTMMAAVWATFIAGALKL), 56–76 (IEFILYKAGLCFVHCLLLCGA), 127–147 (LILDGRNIWTLMLPLTASIML), 159–179 (VFVYPQYILGLAIGYPAITGW), 190–210 (GDIIKHCIPICLLVFFWCVYF), 240–260 (LFLAFLSVLPLLTIPYIISTI), 264–284 (WLWVSWMATWTVSIVMQIAQF), and 295–315 (IHWDNFLLGLWTIVACMVEVG).

The protein belongs to the UbiA prenyltransferase family. Requires Mg(2+) as cofactor.

It localises to the golgi apparatus membrane. The catalysed reaction is 5,7-dihydroxy-4-methylphthalide + (2E,6E)-farnesyl diphosphate = 4-farnesyl-3,5-dihydroxy-6-methylphthalide + diphosphate. It functions in the pathway secondary metabolite biosynthesis; terpenoid biosynthesis. In terms of biological role, polyprenyl transferase; part of the gene cluster that mediates the biosynthesis of mycophenolic acid (MPA), the first isolated antibiotic natural product in the world obtained from a culture of Penicillium brevicompactum in 1893. MpaA' is a Golgi apparatus-associated enzyme that catalyzes the prenylation of 5,7-dihydroxy-4,6-dimethylphthalide (DHMP) to yield farnesyl-DHMP (FDHMP). The first step of the pathway is the synthesis of 5-methylorsellinic acid (5MOA) by the cytosolic polyketide synthase mpaC. 5MOA is then converted to the phthalide compound 5,7-dihydroxy-4,6-dimethylphthalide (DHMP) by the endoplasmic reticulum-bound cytochrome P450 monooxygenase mpaDE. MpaDE first catalyzes hydroxylation of 5-MOA to 4,6-dihydroxy-2-(hydroxymethyl)-3-methylbenzoic acid (DHMB). MpaDE then acts as a lactone synthase that catalyzes the ring closure to convert DHMB into DHMP. The next step is the prenylation of DHMP by the Golgi apparatus-associated prenyltransferase mpaA to yield farnesyl-DHMP (FDHMP). The ER-bound oxygenase mpaB then mediates the oxidative cleavage the C19-C20 double bond in FDHMP to yield FDHMP-3C via a mycophenolic aldehyde intermediate. The O-methyltransferase mpaG catalyzes the methylation of FDHMP-3C to yield MFDHMP-3C. After the cytosolic methylation of FDHMP-3C, MFDHMP-3C enters into peroxisomes probably via free diffusion due to its low molecular weight. Upon a peroxisomal CoA ligation reaction, catalyzed by a beta-oxidation component enzyme acyl-CoA ligase ACL891, MFDHMP-3C-CoA would then be restricted to peroxisomes for the following beta-oxidation pathway steps. The peroxisomal beta-oxidation machinery than converts MFDHMP-3C-CoA into MPA_CoA, via a beta-oxidation chain-shortening process. Finally mpaH acts as a peroxisomal acyl-CoA hydrolase with high substrate specificity toward MPA-CoA to release the final product MPA. The chain is Polyprenyl transferase mpaA' from Penicillium brevicompactum.